The chain runs to 162 residues: NADH-quinone oxidoreductase subunit I (162 aa).

4Fe-4S ferredoxin-type domains are found at residues 53–83 (LRRYPNGEERCIACKLCEAVCPAMAITIESE) and 93–122 (TRYDIDMIKCIFCGFCEEACPVDAIVETRV). [4Fe-4S] cluster-binding residues include cysteine 63, cysteine 66, cysteine 69, cysteine 73, cysteine 102, cysteine 105, cysteine 108, and cysteine 112.

The protein belongs to the complex I 23 kDa subunit family. As to quaternary structure, NDH-1 is composed of 14 different subunits. Subunits NuoA, H, J, K, L, M, N constitute the membrane sector of the complex. The cofactor is [4Fe-4S] cluster.

The protein resides in the cell inner membrane. The enzyme catalyses a quinone + NADH + 5 H(+)(in) = a quinol + NAD(+) + 4 H(+)(out). Its function is as follows. NDH-1 shuttles electrons from NADH, via FMN and iron-sulfur (Fe-S) centers, to quinones in the respiratory chain. The immediate electron acceptor for the enzyme in this species is believed to be ubiquinone. Couples the redox reaction to proton translocation (for every two electrons transferred, four hydrogen ions are translocated across the cytoplasmic membrane), and thus conserves the redox energy in a proton gradient. This chain is NADH-quinone oxidoreductase subunit I, found in Nitrosomonas europaea (strain ATCC 19718 / CIP 103999 / KCTC 2705 / NBRC 14298).